A 640-amino-acid chain; its full sequence is Threonine--tRNA ligase (640 aa).

Positions 1–61 (MPIITLPNGD…TEDSTLQIIT (61 aa)) constitute a TGS domain. The tract at residues 242–533 (DHRKIGKALD…LIEHYAGFMP (292 aa)) is catalytic. Residues Cys333, His384, and His510 each coordinate Zn(2+).

The protein belongs to the class-II aminoacyl-tRNA synthetase family. As to quaternary structure, homodimer. Requires Zn(2+) as cofactor.

It localises to the cytoplasm. It catalyses the reaction tRNA(Thr) + L-threonine + ATP = L-threonyl-tRNA(Thr) + AMP + diphosphate + H(+). Its function is as follows. Catalyzes the attachment of threonine to tRNA(Thr) in a two-step reaction: L-threonine is first activated by ATP to form Thr-AMP and then transferred to the acceptor end of tRNA(Thr). Also edits incorrectly charged L-seryl-tRNA(Thr). This is Threonine--tRNA ligase from Acinetobacter baumannii (strain AB0057).